The chain runs to 355 residues: Elongation factor Ts (355 aa).

The tract at residues 82–85 is involved in Mg(2+) ion dislocation from EF-Tu; sequence TDFV.

This sequence belongs to the EF-Ts family.

It localises to the cytoplasm. Its function is as follows. Associates with the EF-Tu.GDP complex and induces the exchange of GDP to GTP. It remains bound to the aminoacyl-tRNA.EF-Tu.GTP complex up to the GTP hydrolysis stage on the ribosome. This chain is Elongation factor Ts, found in Wolinella succinogenes (strain ATCC 29543 / DSM 1740 / CCUG 13145 / JCM 31913 / LMG 7466 / NCTC 11488 / FDC 602W) (Vibrio succinogenes).